The sequence spans 467 residues: MSSSLWLQCLQRLQEELPAAEFSMWVRPLQAELNDNTLTLFAPNRFVLDWVRDKYLNNINRLLMEFSGNDVPNLRFEVGSRPVVAPKPAPVRTAADVAAESSAPAQLAQRKPIHKTWDDDSAAADITHRSNVNPKHKFNNFVEGKSNQLGLAAARQVSDNPGAAYNPLFLYGGTGLGKTHLLHAVGNAIVDNNPNAKVVYMHSERFVQDMVKALQNNAIEEFKRYYRSVDALLIDDIQFFANKERSQEEFFHTFNALLEGNQQIILTSDRYPKEISGVEDRLKSRFGWGLTVAIEPPELETRVAILMKKAEDHQIHLPDEVAFFIAKRLRSNVRELEGALNRVIANANFTGRPITIDFVREALRDLLALQEKLVTIDNIQKTVAEYYKIKVADLLSKRRSRSVARPRQLAMALAKELTNHSLPEIGDAFGGRDHTTVLHACRKIEQLREESHDIKEDYSNLIRTLSS.

Residues 1-87 (MSSSLWLQCL…VGSRPVVAPK (87 aa)) are domain I, interacts with DnaA modulators. Residues 87-130 (KPAPVRTAADVAAESSAPAQLAQRKPIHKTWDDDSAAADITHRS) are domain II. Residues 131–347 (NVNPKHKFNN…GALNRVIANA (217 aa)) are domain III, AAA+ region. Positions 175, 177, 178, and 179 each coordinate ATP. A domain IV, binds dsDNA region spans residues 348 to 467 (NFTGRPITID…YSNLIRTLSS (120 aa)).

The protein belongs to the DnaA family. As to quaternary structure, oligomerizes as a right-handed, spiral filament on DNA at oriC.

It localises to the cytoplasm. Functionally, plays an essential role in the initiation and regulation of chromosomal replication. ATP-DnaA binds to the origin of replication (oriC) to initiate formation of the DNA replication initiation complex once per cell cycle. Binds the DnaA box (a 9 base pair repeat at the origin) and separates the double-stranded (ds)DNA. Forms a right-handed helical filament on oriC DNA; dsDNA binds to the exterior of the filament while single-stranded (ss)DNA is stabiized in the filament's interior. The ATP-DnaA-oriC complex binds and stabilizes one strand of the AT-rich DNA unwinding element (DUE), permitting loading of DNA polymerase. After initiation quickly degrades to an ADP-DnaA complex that is not apt for DNA replication. Binds acidic phospholipids. In Vibrio cholerae serotype O1 (strain ATCC 39315 / El Tor Inaba N16961), this protein is Chromosomal replication initiator protein DnaA.